We begin with the raw amino-acid sequence, 565 residues long: Formate--tetrahydrofolate ligase (565 aa).

65–72 (TPAGEGKT) contacts ATP.

This sequence belongs to the formate--tetrahydrofolate ligase family.

It carries out the reaction (6S)-5,6,7,8-tetrahydrofolate + formate + ATP = (6R)-10-formyltetrahydrofolate + ADP + phosphate. Its pathway is one-carbon metabolism; tetrahydrofolate interconversion. This Syntrophus aciditrophicus (strain SB) protein is Formate--tetrahydrofolate ligase.